The primary structure comprises 228 residues: MPKLILCRHGQSEWNAKNLFTGWADVKLSKQGIEEAQSAGKKIYGNQIEIDIAFTSLLTRALETTQYILAGSDQQWIPVYKSWRLNERHYGGLQGLNKDDARKKWGEDQVHQWRRSYDVRPPRESEEQREAYLKNRRYQHIDHRMMPYCESLKDTLERVVPFWTDHISQHLLDDKTVLVSAHGNSIRALIKYLEGLSEEDIVGYEIKTGAPLVYELTDDLVVKDKYYL.

Residues 8-15, 21-22, Arg-60, 87-90, Lys-98, 114-115, and 183-184 each bind substrate; these read RHGQSEWN, TG, ERHY, RR, and GN. Catalysis depends on His-9, which acts as the Tele-phosphohistidine intermediate. Catalysis depends on Glu-87, which acts as the Proton donor/acceptor.

The protein belongs to the phosphoglycerate mutase family. BPG-dependent PGAM subfamily.

The enzyme catalyses (2R)-2-phosphoglycerate = (2R)-3-phosphoglycerate. It functions in the pathway carbohydrate degradation; glycolysis; pyruvate from D-glyceraldehyde 3-phosphate: step 3/5. Catalyzes the interconversion of 2-phosphoglycerate and 3-phosphoglycerate. The sequence is that of 2,3-bisphosphoglycerate-dependent phosphoglycerate mutase from Staphylococcus epidermidis (strain ATCC 35984 / DSM 28319 / BCRC 17069 / CCUG 31568 / BM 3577 / RP62A).